A 357-amino-acid chain; its full sequence is MKKNIMGLSLFSSAGIGEYFLSRVGIDIIVANELIKKRADLYQKIYPNHKMVIGDIRDQRIFNKVLNIALTNQVDFLIASPPCQGMSVAGKNRDVSNMANDNRNYLIMYVIAMIKKLKPAYILIENVPFLLKLELYIDNKLTPIKNILEDEFGSEYHIHFDILDAADYGTPQRRKRAIIRLNKKGTIWNLPLKQNIVSVEQAIGNLPSIESGKHSGLKWHYGRGHTEQQIEWMKHTPTGKSAFENLVHYPRKANGEKVKGYHSSYRRIRWDEPAPTITIRNDAISSQRNVHPGRPLLDGTYSDARVLSVLELMRLTGLPDNWEIPDDTPEILIRQIIGECIPPLLIENITREIFNEN.

The SAM-dependent MTase C5-type domain occupies 5 to 357 (IMGLSLFSSA…NITREIFNEN (353 aa)). Cys-83 is an active-site residue.

Belongs to the class I-like SAM-binding methyltransferase superfamily. C5-methyltransferase family.

The enzyme catalyses a 2'-deoxycytidine in DNA + S-adenosyl-L-methionine = a 5-methyl-2'-deoxycytidine in DNA + S-adenosyl-L-homocysteine + H(+). Functionally, a methylase that recognizes DNA with the sequence 5'-GCGTC-3', methylates C-2, and protects the DNA from cleavage by the HgaI endonuclease. The protein is Type II methyltransferase M1.HgaI (hgaIAM) of Avibacterium volantium (Pasteurella volantium).